The following is a 472-amino-acid chain: 6-phosphogluconate dehydrogenase, decarboxylating (472 aa).

Residues 10–15 (GMAVMG), 33–35 (NRT), 74–76 (VQA), and Asn102 contribute to the NADP(+) site. Residues Asn102 and 128–130 (SGG) contribute to the substrate site. Lys184 (proton acceptor) is an active-site residue. Residue 187–188 (HN) coordinates substrate. Glu191 serves as the catalytic Proton donor. Tyr192, Lys262, Arg289, Arg447, and His453 together coordinate substrate.

Belongs to the 6-phosphogluconate dehydrogenase family. In terms of assembly, homodimer.

It catalyses the reaction 6-phospho-D-gluconate + NADP(+) = D-ribulose 5-phosphate + CO2 + NADPH. Its pathway is carbohydrate degradation; pentose phosphate pathway; D-ribulose 5-phosphate from D-glucose 6-phosphate (oxidative stage): step 3/3. In terms of biological role, catalyzes the oxidative decarboxylation of 6-phosphogluconate to ribulose 5-phosphate and CO(2), with concomitant reduction of NADP to NADPH. The protein is 6-phosphogluconate dehydrogenase, decarboxylating (gnd) of Lactococcus lactis subsp. cremoris (strain MG1363).